The sequence spans 392 residues: Formate-dependent phosphoribosylglycinamide formyltransferase (392 aa).

Residues 22–23 (EL) and E82 contribute to the N(1)-(5-phospho-beta-D-ribosyl)glycinamide site. ATP is bound by residues R114, K155, 160-165 (SSGKGQ), 195-198 (EGLV), and E203. In terms of domain architecture, ATP-grasp spans 119 to 308 (RLAAETLSLP…EFALHVRAFL (190 aa)). Mg(2+) is bound by residues E267 and E279. N(1)-(5-phospho-beta-D-ribosyl)glycinamide-binding positions include D286, K355, and 362–363 (RR).

Belongs to the PurK/PurT family. In terms of assembly, homodimer.

It catalyses the reaction N(1)-(5-phospho-beta-D-ribosyl)glycinamide + formate + ATP = N(2)-formyl-N(1)-(5-phospho-beta-D-ribosyl)glycinamide + ADP + phosphate + H(+). The protein operates within purine metabolism; IMP biosynthesis via de novo pathway; N(2)-formyl-N(1)-(5-phospho-D-ribosyl)glycinamide from N(1)-(5-phospho-D-ribosyl)glycinamide (formate route): step 1/1. Functionally, involved in the de novo purine biosynthesis. Catalyzes the transfer of formate to 5-phospho-ribosyl-glycinamide (GAR), producing 5-phospho-ribosyl-N-formylglycinamide (FGAR). Formate is provided by PurU via hydrolysis of 10-formyl-tetrahydrofolate. In Sodalis glossinidius (strain morsitans), this protein is Formate-dependent phosphoribosylglycinamide formyltransferase.